The primary structure comprises 321 residues: Lambda-crystallin homolog (321 aa).

Ser6 is subject to Phosphoserine. NAD(+) contacts are provided by residues 19–20, Asp39, Glu100, and Lys105; that span reads LI.

This sequence belongs to the 3-hydroxyacyl-CoA dehydrogenase family. In terms of assembly, homodimer.

Its subcellular location is the cytoplasm. It catalyses the reaction L-gulonate + NAD(+) = 3-dehydro-L-gulonate + NADH + H(+). Inhibited by malonate. In terms of biological role, has high L-gulonate 3-dehydrogenase activity. It also exhibits low dehydrogenase activity toward L-3-hydroxybutyrate (HBA) and L-threonate. The sequence is that of Lambda-crystallin homolog (CRYL1) from Bos taurus (Bovine).